The sequence spans 165 residues: GPI-anchored protein LORELEI (165 aa).

Positions 1 to 20 (MELILLFFFLMALLVSLSSS) are cleaved as a signal peptide. The required for its function in pollen tube reception stretch occupies residues 82-93 (PYVSQINDMNSD). Asn-137 carries N-linked (GlcNAc...) asparagine glycosylation. Ser-139 is lipidated: GPI-anchor amidated serine. The propeptide at 140 to 165 (TADSTPRFISLLISAATAVFALLVLT) is removed in mature form.

Interacts with FER. Expressed in leaves, buds, flowers and stems. Highest expression in the synergid cells of the female gametophyte.

It localises to the cell membrane. Functionally, female gametophyte-specific component of the signaling pathway required for fertilization. Required for reception of the pollen tube by the female gametophyte. Acts specifically at the synergid cell surface for pollen tube reception. Plays a role in double fertilization and early seed development. Component of the FER-regulated Rho GTPase signaling complex. Acts as a chaperone and coreceptor for FER. Required for localization of FER to the plasma membrane. The sequence is that of GPI-anchored protein LORELEI (LRE) from Arabidopsis thaliana (Mouse-ear cress).